The primary structure comprises 550 residues: Glucose-6-phosphate isomerase (550 aa).

Catalysis depends on Glu355, which acts as the Proton donor. Active-site residues include His386 and Lys512.

The protein belongs to the GPI family.

The protein resides in the cytoplasm. It catalyses the reaction alpha-D-glucose 6-phosphate = beta-D-fructose 6-phosphate. The protein operates within carbohydrate biosynthesis; gluconeogenesis. It functions in the pathway carbohydrate degradation; glycolysis; D-glyceraldehyde 3-phosphate and glycerone phosphate from D-glucose: step 2/4. Functionally, catalyzes the reversible isomerization of glucose-6-phosphate to fructose-6-phosphate. This chain is Glucose-6-phosphate isomerase, found in Rhodococcus opacus (strain B4).